The primary structure comprises 90 residues: MNVKCERFIVKGHVQGVGFRYHTSHQGLKLGLTGYAKNLNNGDVEVMACGPKEKIDQFCEWLQEGPRTATVESVTRESVSYKPFRGFKIL.

The 86-residue stretch at 5–90 (CERFIVKGHV…YKPFRGFKIL (86 aa)) folds into the Acylphosphatase-like domain. Active-site residues include Arg20 and Asn38.

It belongs to the acylphosphatase family.

The enzyme catalyses an acyl phosphate + H2O = a carboxylate + phosphate + H(+). The sequence is that of Acylphosphatase (acyP) from Vibrio parahaemolyticus serotype O3:K6 (strain RIMD 2210633).